The chain runs to 384 residues: Putative glutamate--cysteine ligase 2 (384 aa).

Belongs to the glutamate--cysteine ligase type 2 family. YbdK subfamily.

It carries out the reaction L-cysteine + L-glutamate + ATP = gamma-L-glutamyl-L-cysteine + ADP + phosphate + H(+). Functionally, ATP-dependent carboxylate-amine ligase which exhibits weak glutamate--cysteine ligase activity. The polypeptide is Putative glutamate--cysteine ligase 2 (Dechloromonas aromatica (strain RCB)).